A 691-amino-acid chain; its full sequence is Calcium-binding and coiled-coil domain-containing protein 1 (691 aa).

The interval 1–30 (MEESPLSRAPSRGGVNFLNVARTYIPNTKV) is p300 KIX-binding. The N-terminal AD (CTNNB1 binding site) stretch occupies residues 1–190 (MEESPLSRAP…VQELERALAT (190 aa)). Residue Ser4 is modified to Phosphoserine. The tract at residues 45–125 (SDWIGIFKVE…FQFREPRPMD (81 aa)) is interaction with GATA1. Coiled-coil stretches lie at residues 145 to 205 (KATV…YKGI), 232 to 339 (ELED…AELE), and 417 to 514 (QSVE…ADEK). The tract at residues 501-691 (RKLEARLEKV…FSTQDPFTFE (191 aa)) is C-terminal AD (CTNNB1 binding site); interaction with CCAR1. The interval 514-606 (KWNEDATTED…SEAEDEKSVL (93 aa)) is disordered. The UBZ1-type zinc-finger motif lies at 653 to 679 (WKECPICKERFPAESDKDALEDHMDGH). The Zn(2+) site is built by Cys656, Cys659, His675, and His679.

This sequence belongs to the CALCOCO family. In terms of assembly, part of a calphoglin complex consisting of CALCOCO1, PPA1 and PGM. Interacts with the bHLH-PAS domains of GRIP1, AHR and ARNT. Interacts with CTNNB1 via both its N- and C-terminal regions. Interacts with EP300. Interacts with CCAR1 (via N-terminus) and GATA1.

The protein localises to the cytoplasm. The protein resides in the nucleus. Its function is as follows. Functions as a coactivator for aryl hydrocarbon and nuclear receptors (NR). Recruited to promoters through its contact with the N-terminal basic helix-loop-helix-Per-Arnt-Sim (PAS) domain of transcription factors or coactivators, such as NCOA2. During ER-activation acts synergistically in combination with other NCOA2-binding proteins, such as EP300, CREBBP and CARM1. Involved in the transcriptional activation of target genes in the Wnt/CTNNB1 pathway. Functions as a secondary coactivator in LEF1-mediated transcriptional activation via its interaction with CTNNB1. Coactivator function for nuclear receptors and LEF1/CTNNB1 involves differential utilization of two different activation regions. In association with CCAR1 enhances GATA1- and MED1-mediated transcriptional activation from the gamma-globin promoter during erythroid differentiation of K562 erythroleukemia cells. In terms of biological role, seems to enhance inorganic pyrophosphatase thus activating phosphogluomutase (PMG). Probably functions as a component of the calphoglin complex, which is involved in linking cellular metabolism (phosphate and glucose metabolism) with other core functions including protein synthesis and degradation, calcium signaling and cell growth. The sequence is that of Calcium-binding and coiled-coil domain-containing protein 1 (CALCOCO1) from Homo sapiens (Human).